Here is a 509-residue protein sequence, read N- to C-terminus: GMP synthase [glutamine-hydrolyzing] (509 aa).

The region spanning 4–193 (NVLILDFGSQ…LIKIAGTKAT (190 aa)) is the Glutamine amidotransferase type-1 domain. C79 serves as the catalytic Nucleophile. Residues H167 and E169 contribute to the active site. In terms of domain architecture, GMPS ATP-PPase spans 194-384 (WTPGKFVDLT…LGIDKELLGR (191 aa)). An ATP-binding site is contributed by 221–227 (SGGVDST).

As to quaternary structure, homodimer.

The catalysed reaction is XMP + L-glutamine + ATP + H2O = GMP + L-glutamate + AMP + diphosphate + 2 H(+). Its pathway is purine metabolism; GMP biosynthesis; GMP from XMP (L-Gln route): step 1/1. Its function is as follows. Catalyzes the synthesis of GMP from XMP. In Christiangramia forsetii (strain DSM 17595 / CGMCC 1.15422 / KT0803) (Gramella forsetii), this protein is GMP synthase [glutamine-hydrolyzing].